Consider the following 185-residue polypeptide: Ribosome-recycling factor (185 aa).

This sequence belongs to the RRF family.

The protein resides in the cytoplasm. Functionally, responsible for the release of ribosomes from messenger RNA at the termination of protein biosynthesis. May increase the efficiency of translation by recycling ribosomes from one round of translation to another. The protein is Ribosome-recycling factor of Mycolicibacterium vanbaalenii (strain DSM 7251 / JCM 13017 / BCRC 16820 / KCTC 9966 / NRRL B-24157 / PYR-1) (Mycobacterium vanbaalenii).